The sequence spans 133 residues: Small heat shock protein ibp (133 aa).

The 116-residue stretch at 11 to 126 folds into the sHSP domain; the sequence is EQPLSENPNY…KPKKISINEE (116 aa).

It belongs to the small heat shock protein (HSP20) family.

The sequence is that of Small heat shock protein ibp (ibp) from Wigglesworthia glossinidia brevipalpis.